Reading from the N-terminus, the 144-residue chain is Large ribosomal subunit protein uL22 (144 aa).

Residues 123 to 144 (ELVKKRTMGHKKEKAKQKQKQQ) are disordered. Over residues 125 to 144 (VKKRTMGHKKEKAKQKQKQQ) the composition is skewed to basic residues.

Belongs to the universal ribosomal protein uL22 family. Part of the 50S ribosomal subunit.

In terms of biological role, this protein binds specifically to 23S rRNA; its binding is stimulated by other ribosomal proteins, e.g. L4, L17, and L20. It is important during the early stages of 50S assembly. It makes multiple contacts with different domains of the 23S rRNA in the assembled 50S subunit and ribosome. Functionally, the globular domain of the protein is located near the polypeptide exit tunnel on the outside of the subunit, while an extended beta-hairpin is found that lines the wall of the exit tunnel in the center of the 70S ribosome. The polypeptide is Large ribosomal subunit protein uL22 (Mycoplasma genitalium (strain ATCC 33530 / DSM 19775 / NCTC 10195 / G37) (Mycoplasmoides genitalium)).